Here is a 119-residue protein sequence, read N- to C-terminus: Large ribosomal subunit protein bL19 (119 aa).

Belongs to the bacterial ribosomal protein bL19 family.

This protein is located at the 30S-50S ribosomal subunit interface and may play a role in the structure and function of the aminoacyl-tRNA binding site. In Idiomarina loihiensis (strain ATCC BAA-735 / DSM 15497 / L2-TR), this protein is Large ribosomal subunit protein bL19.